Consider the following 559-residue polypeptide: Forkhead box protein O6 (559 aa).

2 disordered regions span residues 1–77 (MAAK…VGPL) and 163–183 (SWWM…RRAV). The segment at residues 88 to 182 (WGNLSYADLI…KTGKTPRRRA (95 aa)) is a DNA-binding region (fork-head). Position 184 is a phosphoserine (Ser-184). 2 disordered regions span residues 197–232 (KASK…KWAA) and 534–559 (NFDS…WVPG). Composition is skewed to pro residues over residues 213–222 (DSPPGAPVPG) and 539–553 (LPPP…PPPN).

Phosphorylation of Ser-184 is be important in regulating the transacriptional activity. Expressed in brain in areas of the nucleus accumbens, cingulate cortex, parts of the amygdala and in the hippocampus.

The protein resides in the cytoplasm. The protein localises to the nucleus. Its function is as follows. Transcriptional activator. The polypeptide is Forkhead box protein O6 (Foxo6) (Mus musculus (Mouse)).